Reading from the N-terminus, the 267-residue chain is Centromere protein Q (267 aa).

2 stretches are compositionally biased toward basic residues: residues 1–22 (MSGK…LKQR) and 39–49 (KRNRSHAKHLS). The segment at 1–54 (MSGKARASRKKPQQVKRSLKQRANKEADLPENEVGNTAKRNRSHAKHLSSKVTG) is disordered. At Ser-49 the chain carries Phosphoserine. Residues 100 to 202 (IKRKEEIQCH…EEQEVKQVFH (103 aa)) are a coiled coil.

It belongs to the CENP-Q/OKP1 family. Component of the CENPA-CAD complex, composed of CENPI, CENPK, CENPL, CENPO, CENPP, CENPQ, CENPR and CENPS. The CENPA-CAD complex interacts with the CENPA-NAC complex, at least composed of CENPA, CENPC, CENPH, CENPM, CENPN, CENPT and CENPU. Phosphorylation at Ser-49 is essential for CENPE recruitment to kinetochores and orderly chromosome congression.

It is found in the nucleus. The protein resides in the chromosome. The protein localises to the centromere. In terms of biological role, component of the CENPA-CAD (nucleosome distal) complex, a complex recruited to centromeres which is involved in assembly of kinetochore proteins, mitotic progression and chromosome segregation. May be involved in incorporation of newly synthesized CENPA into centromeres via its interaction with the CENPA-NAC complex. Plays an important role in chromosome congression and in the recruitment of CENP-O complex (which comprises CENPO, CENPP, CENPQ and CENPU), CENPE and PLK1 to the kinetochores. This Mus musculus (Mouse) protein is Centromere protein Q (Cenpq).